A 102-amino-acid chain; its full sequence is Protein RnfH (102 aa).

It belongs to the UPF0125 (RnfH) family.

The polypeptide is Protein RnfH (Haemophilus influenzae (strain PittEE)).